Consider the following 63-residue polypeptide: Small ribosomal subunit protein eS17 (63 aa).

This sequence belongs to the eukaryotic ribosomal protein eS17 family.

The polypeptide is Small ribosomal subunit protein eS17 (Methanococcus maripaludis (strain C7 / ATCC BAA-1331)).